The sequence spans 356 residues: Alanine racemase, catabolic (356 aa).

Residue K35 is the Proton acceptor; specific for D-alanine of the active site. K35 bears the N6-(pyridoxal phosphate)lysine mark. R130 contacts substrate. Y253 functions as the Proton acceptor; specific for L-alanine in the catalytic mechanism. M301 contributes to the substrate binding site.

Belongs to the alanine racemase family. Monomer. Requires pyridoxal 5'-phosphate as cofactor.

It carries out the reaction L-alanine = D-alanine. Inactivated by D- and L-beta-fluoroalanine, D- and L-beta-chloroalanine, and O-acetyl-D-serine. Isomerizes L-alanine to D-alanine which is then oxidized to pyruvate by DadA. In Salmonella typhimurium (strain LT2 / SGSC1412 / ATCC 700720), this protein is Alanine racemase, catabolic (dadX).